Consider the following 149-residue polypeptide: Glutamate mutase sigma subunit (149 aa).

Residues 5–138 (DPTVVLGTIG…DAVKTELDVD (134 aa)) form the B12-binding domain. Residues 15 to 19 (SDAHA), His-18, 63 to 65 (SSL), and 94 to 98 (NLAVG) each bind adenosylcob(III)alamin.

The protein belongs to the methylaspartate mutase GlmS subunit family. As to quaternary structure, heterotetramer composed of 2 epsilon subunits (GlmE) and 2 sigma subunits (GlmS). GlmE exists as a homodimer and GlmS as a monomer. Requires adenosylcob(III)alamin as cofactor.

The enzyme catalyses (2S,3S)-3-methyl-L-aspartate = L-glutamate. Its pathway is amino-acid degradation; L-glutamate degradation via mesaconate pathway; acetate and pyruvate from L-glutamate: step 1/4. Catalyzes the carbon skeleton rearrangement of L-glutamate to L-threo-3-methylaspartate ((2S,3S)-3-methylaspartate). The sequence is that of Glutamate mutase sigma subunit from Halobacterium salinarum (strain ATCC 700922 / JCM 11081 / NRC-1) (Halobacterium halobium).